A 161-amino-acid chain; its full sequence is Epithelial membrane protein 2 (161 aa).

4 helical membrane-spanning segments follow: residues 1–21 (MLVI…LLFI), 67–87 (TMIL…LQLF), 95–115 (FVFT…GASI), and 137–157 (FVVA…YLVL).

This sequence belongs to the PMP-22/EMP/MP20 family. Expressed in the arches, orbits, pectoral fins, vessels, pronephric renal tubules, and glomeruli.

It localises to the golgi apparatus membrane. The protein resides in the cell membrane. The protein localises to the apical cell membrane. Its subcellular location is the membrane raft. It is found in the cytoplasm. It localises to the nucleus. The protein resides in the perinuclear region. Its function is as follows. Functions as a key regulator of cell membrane composition by regulating protein surface expression. Also, plays a role in regulation of processes including cell migration, cell proliferation, cell contraction and cell adhesion. May play a role in glomerular filtration. The polypeptide is Epithelial membrane protein 2 (emp2) (Danio rerio (Zebrafish)).